We begin with the raw amino-acid sequence, 302 residues long: Urease accessory protein UreD 2 (302 aa).

It belongs to the UreD family. UreD, UreF and UreG form a complex that acts as a GTP-hydrolysis-dependent molecular chaperone, activating the urease apoprotein by helping to assemble the nickel containing metallocenter of UreC. The UreE protein probably delivers the nickel.

The protein resides in the cytoplasm. In terms of biological role, required for maturation of urease via the functional incorporation of the urease nickel metallocenter. The chain is Urease accessory protein UreD 2 from Brucella ovis (strain ATCC 25840 / 63/290 / NCTC 10512).